Reading from the N-terminus, the 76-residue chain is MTKAITLAIFMVVLVLGMVTKETQGEEKQCYDYLLTPQENCEGLICAHECTMQHGGNGVCVDTTSTVCICTYDCTS.

Positions 1 to 25 (MTKAITLAIFMVVLVLGMVTKETQG) are cleaved as a signal peptide. Cystine bridges form between Cys30–Cys74, Cys41–Cys60, Cys46–Cys68, and Cys50–Cys70.

It belongs to the DEFL family.

It is found in the secreted. This chain is Defensin-like protein 125 (LCR54), found in Arabidopsis thaliana (Mouse-ear cress).